The sequence spans 624 residues: ABC transporter G family member 23 (624 aa).

The region spanning 52 to 296 is the ABC transporter domain; sequence LTVTNLSYTI…IAKLGFQIPE (245 aa). 84–91 serves as a coordination point for ATP; it reads GPSGTGKS. Positions 350-560 constitute an ABC transmembrane type-2 domain; the sequence is TEISYLCSRF…PLESMVVNEY (211 aa). 6 consecutive transmembrane segments (helical) span residues 369 to 389, 402 to 422, 450 to 470, 480 to 500, 511 to 531, and 595 to 615; these read LFLA…SVYT, LGLF…ALPI, IAFV…VYWI, FSFF…LVLF, GNSL…YFIP, and INVG…WGIL.

It belongs to the ABC transporter superfamily. ABCG family. Eye pigment precursor importer (TC 3.A.1.204) subfamily.

The protein resides in the membrane. This Arabidopsis thaliana (Mouse-ear cress) protein is ABC transporter G family member 23 (ABCG23).